A 273-amino-acid chain; its full sequence is Dermonecrotic toxin LhSicTox-alphaIA1iii (273 aa).

His-5 is an active-site residue. Positions 25 and 27 each coordinate Mg(2+). The active-site Nucleophile is His-41. 2 disulfide bridges follow: Cys-45–Cys-51 and Cys-47–Cys-190. Asp-85 contacts Mg(2+).

It belongs to the arthropod phospholipase D family. Class II subfamily. Requires Mg(2+) as cofactor. As to expression, expressed by the venom gland.

It localises to the secreted. The catalysed reaction is an N-(acyl)-sphingosylphosphocholine = an N-(acyl)-sphingosyl-1,3-cyclic phosphate + choline. It catalyses the reaction an N-(acyl)-sphingosylphosphoethanolamine = an N-(acyl)-sphingosyl-1,3-cyclic phosphate + ethanolamine. It carries out the reaction a 1-acyl-sn-glycero-3-phosphocholine = a 1-acyl-sn-glycero-2,3-cyclic phosphate + choline. The enzyme catalyses a 1-acyl-sn-glycero-3-phosphoethanolamine = a 1-acyl-sn-glycero-2,3-cyclic phosphate + ethanolamine. Dermonecrotic toxins cleave the phosphodiester linkage between the phosphate and headgroup of certain phospholipids (sphingolipid and lysolipid substrates), forming an alcohol (often choline) and a cyclic phosphate. This toxin acts on sphingomyelin (SM). It may also act on ceramide phosphoethanolamine (CPE), lysophosphatidylcholine (LPC) and lysophosphatidylethanolamine (LPE), but not on lysophosphatidylserine (LPS), and lysophosphatidylglycerol (LPG). It acts by transphosphatidylation, releasing exclusively cyclic phosphate products as second products. Induces dermonecrosis, hemolysis, increased vascular permeability, edema, inflammatory response, and platelet aggregation. This chain is Dermonecrotic toxin LhSicTox-alphaIA1iii, found in Loxosceles hirsuta (Recluse spider).